Consider the following 383-residue polypeptide: Chaperone protein DnaJ (383 aa).

The J domain occupies 6–70 (DYYDVLGVGR…QKRAAYDQYG (65 aa)). The CR-type zinc finger occupies 140–222 (GKETKISYSR…CHGTGREEER (83 aa)). Cys-153, Cys-156, Cys-170, Cys-173, Cys-196, Cys-199, Cys-210, and Cys-213 together coordinate Zn(2+). CXXCXGXG motif repeat units lie at residues 153–160 (CHTCHGSG), 170–177 (CHKCHGAG), 196–203 (CDVCGGTG), and 210–217 (CDTCHGTG).

Belongs to the DnaJ family. Homodimer. Zn(2+) is required as a cofactor.

The protein localises to the cytoplasm. In terms of biological role, participates actively in the response to hyperosmotic and heat shock by preventing the aggregation of stress-denatured proteins and by disaggregating proteins, also in an autonomous, DnaK-independent fashion. Unfolded proteins bind initially to DnaJ; upon interaction with the DnaJ-bound protein, DnaK hydrolyzes its bound ATP, resulting in the formation of a stable complex. GrpE releases ADP from DnaK; ATP binding to DnaK triggers the release of the substrate protein, thus completing the reaction cycle. Several rounds of ATP-dependent interactions between DnaJ, DnaK and GrpE are required for fully efficient folding. Also involved, together with DnaK and GrpE, in the DNA replication of plasmids through activation of initiation proteins. This chain is Chaperone protein DnaJ, found in Latilactobacillus sakei (Lactobacillus sakei).